The following is a 363-amino-acid chain: LIM and cysteine-rich domains protein 1 (363 aa).

Ser-16 is modified (phosphoserine). Residues 99–206 (MIMTNPIATG…GEVALPGQGG (108 aa)) enclose the PET domain. A disordered region spans residues 200–234 (ALPGQGGLPKEEGKQQEKPEGAETAPPTTNGSIGD). The span at 208–220 (PKEEGKQQEKPEG) shows a compositional bias: basic and acidic residues. LIM zinc-binding domains lie at 239–304 (YVCE…SLRP) and 305–363 (RCSG…SKRS).

Interacts with beta-dystroglycan. Interacts with GATA1, GATA4 and GATA6.

The protein localises to the cytoplasm. The protein resides in the nucleus. Functionally, transcriptional cofactor that restricts GATA6 function by inhibiting DNA-binding, resulting in repression of GATA6 transcriptional activation of downstream target genes. Represses GATA6-mediated trans activation of lung- and cardiac tissue-specific promoters. Inhibits DNA-binding by GATA4 and GATA1 to the cTNC promoter. Plays a critical role in the development of cardiac hypertrophy via activation of calcineurin/nuclear factor of activated T-cells signaling pathway. This Bos taurus (Bovine) protein is LIM and cysteine-rich domains protein 1 (LMCD1).